The chain runs to 189 residues: Peptidyl-tRNA hydrolase (189 aa).

Tyrosine 15 serves as a coordination point for tRNA. Histidine 20 functions as the Proton acceptor in the catalytic mechanism. Phenylalanine 66, asparagine 68, and asparagine 114 together coordinate tRNA.

It belongs to the PTH family. As to quaternary structure, monomer.

It is found in the cytoplasm. The enzyme catalyses an N-acyl-L-alpha-aminoacyl-tRNA + H2O = an N-acyl-L-amino acid + a tRNA + H(+). In terms of biological role, hydrolyzes ribosome-free peptidyl-tRNAs (with 1 or more amino acids incorporated), which drop off the ribosome during protein synthesis, or as a result of ribosome stalling. Its function is as follows. Catalyzes the release of premature peptidyl moieties from peptidyl-tRNA molecules trapped in stalled 50S ribosomal subunits, and thus maintains levels of free tRNAs and 50S ribosomes. The chain is Peptidyl-tRNA hydrolase from Streptococcus equi subsp. zooepidemicus (strain H70).